Consider the following 615-residue polypeptide: UvrABC system protein C (615 aa).

The GIY-YIG domain occupies 14–91 (TSPGCYIHKD…IKENKPKYNI (78 aa)). One can recognise a UVR domain in the interval 196 to 231 (NKIIDELKGKMAAAAQTMEFERAAEYRDLIQAIGTL).

This sequence belongs to the UvrC family. Interacts with UvrB in an incision complex.

Its subcellular location is the cytoplasm. In terms of biological role, the UvrABC repair system catalyzes the recognition and processing of DNA lesions. UvrC both incises the 5' and 3' sides of the lesion. The N-terminal half is responsible for the 3' incision and the C-terminal half is responsible for the 5' incision. This Streptococcus pneumoniae serotype 19F (strain G54) protein is UvrABC system protein C.